A 430-amino-acid polypeptide reads, in one-letter code: Histidine--tRNA ligase (430 aa).

The protein belongs to the class-II aminoacyl-tRNA synthetase family. As to quaternary structure, homodimer.

It is found in the cytoplasm. It carries out the reaction tRNA(His) + L-histidine + ATP = L-histidyl-tRNA(His) + AMP + diphosphate + H(+). In Acinetobacter baumannii (strain ATCC 17978 / DSM 105126 / CIP 53.77 / LMG 1025 / NCDC KC755 / 5377), this protein is Histidine--tRNA ligase.